A 296-amino-acid chain; its full sequence is Phosphatidylserine decarboxylase proenzyme (296 aa).

Residues aspartate 92, histidine 149, and serine 251 each act as charge relay system; for autoendoproteolytic cleavage activity in the active site. Catalysis depends on serine 251, which acts as the Schiff-base intermediate with substrate; via pyruvic acid; for decarboxylase activity. Serine 251 bears the Pyruvic acid (Ser); by autocatalysis mark.

The protein belongs to the phosphatidylserine decarboxylase family. PSD-B subfamily. Prokaryotic type I sub-subfamily. Heterodimer of a large membrane-associated beta subunit and a small pyruvoyl-containing alpha subunit. Pyruvate serves as cofactor. In terms of processing, is synthesized initially as an inactive proenzyme. Formation of the active enzyme involves a self-maturation process in which the active site pyruvoyl group is generated from an internal serine residue via an autocatalytic post-translational modification. Two non-identical subunits are generated from the proenzyme in this reaction, and the pyruvate is formed at the N-terminus of the alpha chain, which is derived from the carboxyl end of the proenzyme. The autoendoproteolytic cleavage occurs by a canonical serine protease mechanism, in which the side chain hydroxyl group of the serine supplies its oxygen atom to form the C-terminus of the beta chain, while the remainder of the serine residue undergoes an oxidative deamination to produce ammonia and the pyruvoyl prosthetic group on the alpha chain. During this reaction, the Ser that is part of the protease active site of the proenzyme becomes the pyruvoyl prosthetic group, which constitutes an essential element of the active site of the mature decarboxylase.

Its subcellular location is the cell membrane. It carries out the reaction a 1,2-diacyl-sn-glycero-3-phospho-L-serine + H(+) = a 1,2-diacyl-sn-glycero-3-phosphoethanolamine + CO2. It participates in phospholipid metabolism; phosphatidylethanolamine biosynthesis; phosphatidylethanolamine from CDP-diacylglycerol: step 2/2. Its function is as follows. Catalyzes the formation of phosphatidylethanolamine (PtdEtn) from phosphatidylserine (PtdSer). This is Phosphatidylserine decarboxylase proenzyme from Hahella chejuensis (strain KCTC 2396).